The sequence spans 136 residues: Acidic phospholipase A2 CC-PLA2-2 (136 aa).

The signal sequence occupies residues 1–16; it reads MRTLWIVAVWLMGVEG. 7 cysteine pairs are disulfide-bonded: Cys-42-Cys-129, Cys-44-Cys-60, Cys-59-Cys-109, Cys-65-Cys-136, Cys-66-Cys-102, Cys-73-Cys-95, and Cys-90-Cys-100. Tyr-43, Gly-45, and Gly-47 together coordinate Ca(2+). The active site involves His-63. Asp-64 is a binding site for Ca(2+). Asp-103 is an active-site residue.

Belongs to the phospholipase A2 family. Group II subfamily. D49 sub-subfamily. The cofactor is Ca(2+). Post-translationally, glycosylated (2.5%). As to expression, expressed by the venom gland.

It is found in the secreted. The enzyme catalyses a 1,2-diacyl-sn-glycero-3-phosphocholine + H2O = a 1-acyl-sn-glycero-3-phosphocholine + a fatty acid + H(+). Its function is as follows. Snake venom phospholipase A2 that inhibits blood coagulation and platelet aggregation induced by ADP and arachidonic acid. Inhibits tumor cell adhesion and migration in a dose-dependent manner. Abolishes the attachment of human brain microvascular endothelial cells (HBMEC) to fibrinogen (IC(50)=0.2 uM) and dramatically reduces its adhesion to fibronectin (IC(50)=0.3 uM), whereas no effect is observed on type I collagen, vitronectin or laminin 1. Also blocks the cell migration toward fibronectin and fibrinogen. These effects are not dependent of the catalytic activity, but are mediated by alpha-5/beta-1 (ITGA5/ITGB1) and alpha-v-containing (ITGAV) integrins. Also shows anti-angiogenic activity in chicken chorioallantoix membrane assay. Has a relatively high enzymatic activity. PLA2 catalyzes the calcium-dependent hydrolysis of the 2-acyl groups in 3-sn-phosphoglycerides. This chain is Acidic phospholipase A2 CC-PLA2-2, found in Cerastes cerastes (Horned desert viper).